The chain runs to 559 residues: ADP,ATP carrier protein 1 (559 aa).

Positions 1-10 (MNEVENNNHS) are enriched in polar residues. The interval 1 to 22 (MNEVENNNHSFPREDIPTEDEI) is disordered. N-linked (GlcNAc...) asparagine glycosylation occurs at Asn8. A run of 4 helical transmembrane segments spans residues 46-66 (FALLGLMFGIIGFIYSFMRIL), 79-99 (TILFIKIFYILPVSMALVFLI), 111-131 (IFSIFCGGFASLFFLCGAVFL), and 174-194 (IVFISAEMWGSLVLSYLFLSF). Residue Asn196 is glycosylated (N-linked (GlcNAc...) asparagine). 2 helical membrane passes run 210–230 (PLIIITNVSLFLSATVAGAFF) and 242–262 (QVLLSGIFIFQGFLVVLVIFL). Asn290 carries an N-linked (GlcNAc...) asparagine glycan. Transmembrane regions (helical) follow at residues 305–325 (LLLAMSLIVLFFNISYNMVES), 354–373 (QYMTSVVVICLNLSPFSSYV), and 377–397 (GFLLVGLITPIVTLMAIVLFL). An N-linked (GlcNAc...) asparagine glycan is attached at Asn403. A run of 3 helical transmembrane segments spans residues 425 to 447 (YVLENYFGVIFMSLLKITKYSAF), 473 to 493 (IFGKLGKSIGSIYGLLMFEAL), and 503 to 523 (PITAGIIFIFIVMWVKAIIYL).

Belongs to the ADP/ATP translocase tlc family.

The protein localises to the cell membrane. In terms of biological role, ATP transporter involved in the uptake of ATP from the host cell cytoplasm. Provides the microsporidian cell with host ATP in exchange for ADP. This is an obligate exchange system. This energy acquiring activity is an important component of microsporidian parasitism. In Encephalitozoon cuniculi (strain GB-M1) (Microsporidian parasite), this protein is ADP,ATP carrier protein 1 (NTT1).